The primary structure comprises 244 residues: Secreted RxLR effector protein RXLR-C05 (244 aa).

Residues 1–21 (MRGAFYVATAFLIASSTRTAA) form the signal peptide. Residues 37–46 (LPVGDSDTKS) are compositionally biased toward basic and acidic residues. The interval 37-56 (LPVGDSDTKSLPRRSLKGSG) is disordered. The short motif at 50 to 68 (RSLKGSGDRLEIPVAEEER) is the RxLR-dEER element.

It belongs to the RxLR effector family.

It is found in the secreted. Its subcellular location is the host cytoplasm. The protein localises to the host nucleus. Functionally, secreted effector that suppresses pattern-triggered immunity (PTI) in plant host. The sequence is that of Secreted RxLR effector protein RXLR-C05 from Plasmopara halstedii (Downy mildew of sunflower).